The primary structure comprises 272 residues: Shikimate dehydrogenase (NADP(+)) (272 aa).

Residues 14 to 16 (SKS) and Thr61 each bind shikimate. Catalysis depends on Lys65, which acts as the Proton acceptor. Position 77 (Glu77) interacts with NADP(+). Residues Asn86 and Asp102 each coordinate shikimate. Residues 126–130 (GAGGA), 149–154 (NRTASR), and Met213 each bind NADP(+). Tyr215 is a binding site for shikimate. Residue Gly237 coordinates NADP(+).

It belongs to the shikimate dehydrogenase family. In terms of assembly, homodimer.

It catalyses the reaction shikimate + NADP(+) = 3-dehydroshikimate + NADPH + H(+). It functions in the pathway metabolic intermediate biosynthesis; chorismate biosynthesis; chorismate from D-erythrose 4-phosphate and phosphoenolpyruvate: step 4/7. Functionally, involved in the biosynthesis of the chorismate, which leads to the biosynthesis of aromatic amino acids. Catalyzes the reversible NADPH linked reduction of 3-dehydroshikimate (DHSA) to yield shikimate (SA). The sequence is that of Shikimate dehydrogenase (NADP(+)) from Salmonella typhimurium (strain LT2 / SGSC1412 / ATCC 700720).